Consider the following 806-residue polypeptide: DEP domain-containing protein 1A (806 aa).

The region spanning 24–108 is the DEP domain; sequence FRAAMPLRKH…DNNSLYRFPS (85 aa). The segment at 142–177 is disordered; that stretch reads QFSKKTPKRRASVDSKEEQENEDLMEDQRNDDDFPK. The segment covering 167 to 177 has biased composition (basic and acidic residues); that stretch reads EDQRNDDDFPK. One can recognise a Rho-GAP domain in the interval 279-319; that stretch reads DYFLNLPEPLLTFEFYELFVNILVVCGYITVPNSHNGKHRF. The tract at residues 564-588 is disordered; the sequence is SHSSFPSTSSLLPPTTSPNSTGSES.

The chain is DEP domain-containing protein 1A (depdc1a) from Xenopus laevis (African clawed frog).